A 428-amino-acid polypeptide reads, in one-letter code: Aspartate--tRNA(Asp) ligase (428 aa).

Residue Glu166 participates in L-aspartate binding. The tract at residues 188–191 (QLYK) is aspartate. Arg210 provides a ligand contact to L-aspartate. ATP contacts are provided by residues 210–212 (RAE), 218–220 (RHL), and Glu351. Glu351 and Ser354 together coordinate Mg(2+). 2 residues coordinate L-aspartate: Ser354 and Arg358. 399–402 (GLER) serves as a coordination point for ATP.

Belongs to the class-II aminoacyl-tRNA synthetase family. Type 2 subfamily. Homodimer. The cofactor is Mg(2+).

Its subcellular location is the cytoplasm. It catalyses the reaction tRNA(Asp) + L-aspartate + ATP = L-aspartyl-tRNA(Asp) + AMP + diphosphate. Catalyzes the attachment of L-aspartate to tRNA(Asp) in a two-step reaction: L-aspartate is first activated by ATP to form Asp-AMP and then transferred to the acceptor end of tRNA(Asp). The protein is Aspartate--tRNA(Asp) ligase of Thermoplasma volcanium (strain ATCC 51530 / DSM 4299 / JCM 9571 / NBRC 15438 / GSS1).